A 217-amino-acid polypeptide reads, in one-letter code: ATP synthase subunit 4, mitochondrial (217 aa).

Residues 1–14 constitute a mitochondrion transit peptide; it reads MPFARVGALSARHY. 2 helical membrane passes run 41–61 and 66–86; these read GVLA…LYIV and IVLG…GPGY.

In terms of assembly, F-type ATP synthases have 2 components, the catalytic core F(1) and the membrane-embedded component F(0), linked together by a central stalk and a peripheral stalk. The central stalk, also called rotor shaft, is often seen as part of F(1). The peripheral stalk is seen as part of F(0). F(0) contains the membrane channel next to the rotor. F-type ATP synthases form dimers but each monomer functions independently in ATP generation. The dimer consists of 17 different polypeptides: ATP1 (subunit alpha, 3 molecules per monomer, part of F(1)), ATP2 (subunit beta, 3 copies per monomer, part of F(1)), ATP3 (subunit gamma, part of the central stalk), ATP4 (subunit b, part of the peripheral stalk), ATP5/OSCP (subunit 5/OSCP, part of the peripheral stalk), ATP6 (subunit a, part of the peripheral stalk), ATP7 (subunit d, part of the peripheral stalk), ATP8 (subunit 8, part of the peripheral stalk), OLI1 (subunit c, part of the rotor, 10 molecules per monomer), ATP14 (subunit h, part of the peripheral stalk), ATP15 (subunit epsilon, part of the central stalk), ATP16 (subunit delta, part of the central stalk), ATP17 (subunit f, part of the peripheral stalk), ATP18 (subunit i/j, part of the peripheral stalk), ATP19 (subunit k, dimer-specific, at interface between monomers), ATP20 (subunit g, at interface between monomers), TIM11 (subunit e, at interface between monomers).

Its subcellular location is the mitochondrion inner membrane. Functionally, mitochondrial membrane ATP synthase (F(1)F(0) ATP synthase or Complex V) produces ATP from ADP in the presence of a proton gradient across the membrane which is generated by electron transport complexes of the respiratory chain. F-type ATP synthases consist of two structural domains, F(1) - containing the extramembraneous catalytic core, and F(0) - containing the membrane proton channel, linked together by a central stalk and a peripheral stalk. During catalysis, ATP synthesis in the catalytic domain of F(1) is coupled via a rotary mechanism of the central stalk subunits to proton translocation. Part of the complex F(0) domain and the peripheral stalk, which acts as a stator to hold the catalytic alpha/ATP1(3)beta/ATP2(3) subcomplex and subunit a/ATP6 static relative to the rotary elements. The polypeptide is ATP synthase subunit 4, mitochondrial (Yarrowia lipolytica (strain CLIB 122 / E 150) (Yeast)).